A 101-amino-acid chain; its full sequence is Replication restart protein PriB (101 aa).

Positions 1 to 101 (MTTNNLVLAG…LHAENVELKT (101 aa)) constitute an SSB domain.

Belongs to the PriB family. In terms of assembly, homodimer. Interacts with PriA and DnaT. Component of the replication restart primosome. Primosome assembly occurs via a 'hand-off' mechanism. PriA binds to replication forks, subsequently PriB then DnaT bind; DnaT then displaces ssDNA to generate the helicase loading substrate.

In terms of biological role, involved in the restart of stalled replication forks, which reloads the replicative helicase on sites other than the origin of replication; the PriA-PriB pathway is the major replication restart pathway. During primosome assembly it facilitates complex formation between PriA and DnaT on DNA; stabilizes PriA on DNA. Stimulates the DNA unwinding activity of PriA helicase. The protein is Replication restart protein PriB of Shewanella piezotolerans (strain WP3 / JCM 13877).